The primary structure comprises 273 residues: Light-independent protochlorophyllide reductase iron-sulfur ATP-binding protein (273 aa).

Residues 12–17 (GIGKST) and lysine 41 each bind ATP. Residue serine 16 participates in Mg(2+) binding. [4Fe-4S] cluster contacts are provided by cysteine 97 and cysteine 131. 182 to 183 (NR) lines the ATP pocket.

The protein belongs to the NifH/BchL/ChlL family. In terms of assembly, homodimer. Protochlorophyllide reductase is composed of three subunits; BchL, BchN and BchB. [4Fe-4S] cluster is required as a cofactor.

The enzyme catalyses chlorophyllide a + oxidized 2[4Fe-4S]-[ferredoxin] + 2 ADP + 2 phosphate = protochlorophyllide a + reduced 2[4Fe-4S]-[ferredoxin] + 2 ATP + 2 H2O. Its pathway is porphyrin-containing compound metabolism; bacteriochlorophyll biosynthesis (light-independent). Its function is as follows. Component of the dark-operative protochlorophyllide reductase (DPOR) that uses Mg-ATP and reduced ferredoxin to reduce ring D of protochlorophyllide (Pchlide) to form chlorophyllide a (Chlide). This reaction is light-independent. The L component serves as a unique electron donor to the NB-component of the complex, and binds Mg-ATP. The polypeptide is Light-independent protochlorophyllide reductase iron-sulfur ATP-binding protein (Chloroflexus aurantiacus (strain ATCC 29364 / DSM 637 / Y-400-fl)).